The primary structure comprises 699 residues: Glycine--tRNA ligase beta subunit (699 aa).

Belongs to the class-II aminoacyl-tRNA synthetase family. As to quaternary structure, tetramer of two alpha and two beta subunits.

The protein resides in the cytoplasm. It carries out the reaction tRNA(Gly) + glycine + ATP = glycyl-tRNA(Gly) + AMP + diphosphate. The sequence is that of Glycine--tRNA ligase beta subunit from Methylobacterium radiotolerans (strain ATCC 27329 / DSM 1819 / JCM 2831 / NBRC 15690 / NCIMB 10815 / 0-1).